A 161-amino-acid chain; its full sequence is Small ribosomal subunit protein uS15 (161 aa).

Residues 1-13 (MAGKRRKKGRSHS) are compositionally biased toward basic residues. The disordered stretch occupies residues 1–22 (MAGKRRKKGRSHSTRPATPTVP).

It belongs to the universal ribosomal protein uS15 family. Part of the 30S ribosomal subunit.

The protein is Small ribosomal subunit protein uS15 of Hyperthermus butylicus (strain DSM 5456 / JCM 9403 / PLM1-5).